Consider the following 279-residue polypeptide: Nitrogenase vanadium-iron protein alpha chain (279 aa).

3 residues coordinate [8Fe-7S] cluster: C5, C31, and C94. C213 is a [7Fe-V-9S-C-homocitryl] cluster binding site.

Belongs to the NifD/NifK/NifE/NifN family. As to quaternary structure, hexamer of two alpha, two beta, and two delta chains. [8Fe-7S] cluster serves as cofactor. The cofactor is [7Fe-V-9S-C-homocitryl] cluster.

The catalysed reaction is N2 + 8 reduced [2Fe-2S]-[ferredoxin] + 16 ATP + 16 H2O = H2 + 8 oxidized [2Fe-2S]-[ferredoxin] + 2 NH4(+) + 16 ADP + 16 phosphate + 6 H(+). Its function is as follows. This vanadium-iron protein is part of the nitrogenase complex that catalyzes the key enzymatic reactions in nitrogen fixation. This Azotobacter salinestris protein is Nitrogenase vanadium-iron protein alpha chain (vnfD).